Here is a 124-residue protein sequence, read N- to C-terminus: Small ribosomal subunit protein uS13 (124 aa).

The segment at Gly95–Lys124 is disordered.

This sequence belongs to the universal ribosomal protein uS13 family. In terms of assembly, part of the 30S ribosomal subunit. Forms a loose heterodimer with protein S19. Forms two bridges to the 50S subunit in the 70S ribosome.

In terms of biological role, located at the top of the head of the 30S subunit, it contacts several helices of the 16S rRNA. In the 70S ribosome it contacts the 23S rRNA (bridge B1a) and protein L5 of the 50S subunit (bridge B1b), connecting the 2 subunits; these bridges are implicated in subunit movement. Contacts the tRNAs in the A and P-sites. The sequence is that of Small ribosomal subunit protein uS13 from Rhodococcus erythropolis (strain PR4 / NBRC 100887).